A 372-amino-acid chain; its full sequence is DNA replication and repair protein RecF (372 aa).

Residue 30–37 (GDNGQGKT) coordinates ATP.

The protein belongs to the RecF family.

The protein localises to the cytoplasm. Its function is as follows. The RecF protein is involved in DNA metabolism; it is required for DNA replication and normal SOS inducibility. RecF binds preferentially to single-stranded, linear DNA. It also seems to bind ATP. The sequence is that of DNA replication and repair protein RecF from Ruminiclostridium cellulolyticum (strain ATCC 35319 / DSM 5812 / JCM 6584 / H10) (Clostridium cellulolyticum).